Consider the following 238-residue polypeptide: Protein lifeguard 4 (238 aa).

Residues 1–38 (MADTDPGYPRSSIEDDFNYGSCVASASVHIRMAFLRKV) lie on the Cytoplasmic side of the membrane. The helical transmembrane segment at 39–59 (YSILSLQVLLTTVTSALFLYF) threads the bilayer. The Lumenal segment spans residues 60–68 (QALRTFVHE). The helical transmembrane segment at 69 to 89 (SPALIVVFALGSLGLIFALTL) threads the bilayer. Residues 90-97 (HRHTHPLN) are Cytoplasmic-facing. Residues 98–118 (LYLLFAFTLSESLAVAAVVTF) form a helical membrane-spanning segment. Residues 119-120 (YD) are Lumenal-facing. Residues 121–141 (VYLVLQAFIMTTAVFLGLTAY) form a helical membrane-spanning segment. Topologically, residues 142–151 (TLQSKRDFTK) are cytoplasmic. The chain crosses the membrane as a helical span at residues 152-172 (FGAGLFAGLWILCLAGFLKLF). Over 173 to 175 (FYS) the chain is Lumenal. The helical transmembrane segment at 176–196 (ETMELVLASLGALLFCGFIIY) threads the bilayer. The Cytoplasmic portion of the chain corresponds to 197-208 (DTHSLMHRLSPE). The segment at residues 209–229 (EYVIAAISLYMDIINLFLHLL) is an intramembrane region (helical). Over 230-238 (KFLEAVNKK) the chain is Cytoplasmic.

Belongs to the BI1 family. LFG subfamily. As to quaternary structure, interacts with ITPR3.

It localises to the golgi apparatus membrane. Anti-apoptotic protein which can inhibit apoptosis induced by intrinsic and extrinsic apoptotic stimuli. Can modulate both capacitative Ca2+ entry and inositol 1,4,5-trisphosphate (IP3)-mediated Ca2+ release. This Mus musculus (Mouse) protein is Protein lifeguard 4 (Tmbim4).